We begin with the raw amino-acid sequence, 512 residues long: GMP synthase [glutamine-hydrolyzing] (512 aa).

The Glutamine amidotransferase type-1 domain maps to 7–197 (TIIVLDFGSQ…VFGVCGCSEG (191 aa)). Catalysis depends on Cys84, which acts as the Nucleophile. Catalysis depends on residues His171 and Glu173. One can recognise a GMPS ATP-PPase domain in the interval 198–387 (WNMENFIEVE…LGIPDEIVWR (190 aa)). 225 to 231 (SGGVDSS) is an ATP binding site.

In terms of assembly, homodimer.

The enzyme catalyses XMP + L-glutamine + ATP + H2O = GMP + L-glutamate + AMP + diphosphate + 2 H(+). The protein operates within purine metabolism; GMP biosynthesis; GMP from XMP (L-Gln route): step 1/1. Its function is as follows. Catalyzes the synthesis of GMP from XMP. The chain is GMP synthase [glutamine-hydrolyzing] from Bacillus mycoides (strain KBAB4) (Bacillus weihenstephanensis).